We begin with the raw amino-acid sequence, 357 residues long: Endo-1,4-beta-xylanase Xyn11B (357 aa).

The first 27 residues, 1 to 27 (MKIFQNTKNVIVSIAWAAALCTSAVSA), serve as a signal peptide directing secretion. The 198-residue stretch at 29–226 (TLTSNSTGTN…SRGSSDITVS (198 aa)) folds into the GH11 domain. The active-site Nucleophile is E116. The active-site Proton donor is E213. Positions 220–245 (SSDITVSQGGSSGGGNSSSSSSASGG) are disordered.

This sequence belongs to the glycosyl hydrolase 11 (cellulase G) family.

Its subcellular location is the secreted. The catalysed reaction is Endohydrolysis of (1-&gt;4)-beta-D-xylosidic linkages in xylans.. It participates in glycan degradation; xylan degradation. Its function is as follows. Endo-acting xylanase which specifically cleaves internal linkages on the xylan backbone, releasing xylooligosaccharides. Is able to hydrolyze glucuronoxylan and the arabinoxylan from wheat. This chain is Endo-1,4-beta-xylanase Xyn11B (xyn11B), found in Cellvibrio japonicus (Pseudomonas fluorescens subsp. cellulosa).